Reading from the N-terminus, the 247-residue chain is Protein McbF (247 aa).

In terms of domain architecture, ABC transporter spans 6–234 (LEINSLSFSY…NNETTQKRHL (229 aa)). 40-47 (GENPAGKT) is an ATP binding site.

It belongs to the ABC transporter superfamily.

Functionally, together with two further proteins McbE and McbG this protein causes immunity to the peptide antibiotic microcin B17, which inhibits DNA replication in enterobacteriaceae. Immunity is determined by two different mechanisms. McbE is involved in the production of extracellular MccB17 and, in a complex with mcbf it also serves as 'pump' for the export of active MccB17 from the cytoplasm to the periplasmic space. The protein is Protein McbF (mcbF) of Escherichia coli.